The following is a 239-amino-acid chain: Inner kinetochore subunit MCM22 (239 aa).

This sequence belongs to the CENP-K/MCM22 family. Component of the heterotrimeric kinetochore subcomplex CTF3, which consists of CTF3, MCM16 and MCM22. The CTF3 subcomplex is part of a larger constitutive centromere-associated network (CCAN) (also known as central kinetochore CTF19 complex in yeast), which is composed of at least AME1, CHL4, CNN1, CTF3, CTF19, IML3, MCM16, MCM21, MCM22, MHF1, MHF2, MIF2, NKP1, NKP2, OKP1 and WIP1. Interacts with CTF19.

Its subcellular location is the nucleus. It localises to the chromosome. It is found in the centromere. The protein localises to the kinetochore. Its function is as follows. Component of the kinetochore, a multiprotein complex that assembles on centromeric DNA and attaches chromosomes to spindle microtubules, mediating chromosome segregation and sister chromatid segregation during meiosis and mitosis. Component of the inner kinetochore constitutive centromere-associated network (CCAN), which serves as a structural platform for outer kinetochore assembly. The chain is Inner kinetochore subunit MCM22 (MCM22) from Saccharomyces cerevisiae (strain ATCC 204508 / S288c) (Baker's yeast).